The chain runs to 244 residues: Mitochondrial inner membrane protease atp23 (244 aa).

The tract at residues 1–25 (MSSSEGNKPPLVPDSTKESEPQFDP) is disordered. Residue histidine 144 participates in a divalent metal cation binding. The active site involves glutamate 145. An a divalent metal cation-binding site is contributed by histidine 148.

This sequence belongs to the peptidase M76 family.

It localises to the mitochondrion inner membrane. Has a dual role in the assembly of mitochondrial ATPase. Acts as a protease that removes N-terminal residues of mitochondrial ATPase CF(0) subunit 6 at the intermembrane space side. Also involved in the correct assembly of the membrane-embedded ATPase CF(0) particle, probably mediating association of subunit 6 with the subunit 9 ring. This is Mitochondrial inner membrane protease atp23 (atp23) from Botryotinia fuckeliana (strain B05.10) (Noble rot fungus).